The following is a 595-amino-acid chain: Putative terpenoid synthase 16 (595 aa).

Residues Asp349, Asp353, Asn494, and Asp502 each coordinate Mg(2+). Residues 349 to 353 (DDTCD) carry the DDXXD motif motif.

Belongs to the terpene synthase family. Tpsa subfamily. Requires Mg(2+) as cofactor. It depends on Mn(2+) as a cofactor.

It is found in the cytoplasm. It participates in secondary metabolite biosynthesis; terpenoid biosynthesis. This Arabidopsis thaliana (Mouse-ear cress) protein is Putative terpenoid synthase 16 (TPS16).